Consider the following 362-residue polypeptide: C-C chemokine receptor type 10 (362 aa).

At 1–52 (MGTEATEQVSWGHYSGDEEDAYSAEPLPELCYKADVQAFSRAFQPSVSLTVA) the chain is on the extracellular side. Residues 53 to 68 (ALGLAGNGLVLATHLA) form a helical membrane-spanning segment. At 69–78 (ARRAARSPTS) the chain is on the cytoplasmic side. Residues 79–99 (AHLLQLALADLLLALTLPFAA) traverse the membrane as a helical segment. Over 100-114 (AGALQGWSLGSATCR) the chain is Extracellular. An intrachain disulfide couples Cys113 to Cys191. Residues 115 to 136 (TISGLYSASFHAGFLFLACISA) form a helical membrane-spanning segment. At 137-159 (DRYVAIARALPAGPRPSTPGRAH) the chain is on the cytoplasmic side. The helical transmembrane segment at 160 to 179 (LVSVIVWLLSLLLALPALLF) threads the bilayer. At 180-203 (SQDGQREGQRRCRLIFPEGLTQTV) the chain is on the extracellular side. A helical membrane pass occupies residues 204–225 (KGASAVAQVALGFALPLGVMVA). The Cytoplasmic segment spans residues 226–247 (CYALLGRTLLAARGPERRRALR). The helical transmembrane segment at 248-269 (VVVALVAAFVVLQLPYSLALLL) threads the bilayer. Residues 270 to 290 (DTADLLAARERSCPASKRKDV) lie on the Extracellular side of the membrane. The chain crosses the membrane as a helical span at residues 291–313 (ALLVTSGLALARCGLNPVLYAFL). The Cytoplasmic portion of the chain corresponds to 314–362 (GLRFRQDLRRLLRGGSCPSGPQPRRGCPRRPRLSSCSAPTETHSLSWDN). Low complexity predominate over residues 328 to 338 (GSCPSGPQPRR). Residues 328–362 (GSCPSGPQPRRGCPRRPRLSSCSAPTETHSLSWDN) are disordered. A compositionally biased stretch (polar residues) spans 351 to 362 (APTETHSLSWDN).

It belongs to the G-protein coupled receptor 1 family. Expressed at high levels in adult testis, small intestine, fetal lung, fetal kidney. Weaker expression was observed in many other adult tissues including spleen, thymus, lymph node, Peyer patches, colon, heart, ovary, peripheral blood lymphocytes, thyroid and spinal cord. Also expressed by melanocytes, dermal fibroblasts, dermal microvascular endothelial cells. Also detected in T-cells and in skin-derived Langerhans cells.

The protein resides in the cell membrane. Receptor for chemokines SCYA27 and SCYA28. Subsequently transduces a signal by increasing the intracellular calcium ions level and stimulates chemotaxis in a pre-B cell line. The polypeptide is C-C chemokine receptor type 10 (CCR10) (Homo sapiens (Human)).